The primary structure comprises 414 residues: Gamma-glutamyl phosphate reductase (414 aa).

This sequence belongs to the gamma-glutamyl phosphate reductase family.

Its subcellular location is the cytoplasm. The catalysed reaction is L-glutamate 5-semialdehyde + phosphate + NADP(+) = L-glutamyl 5-phosphate + NADPH + H(+). The protein operates within amino-acid biosynthesis; L-proline biosynthesis; L-glutamate 5-semialdehyde from L-glutamate: step 2/2. Its function is as follows. Catalyzes the NADPH-dependent reduction of L-glutamate 5-phosphate into L-glutamate 5-semialdehyde and phosphate. The product spontaneously undergoes cyclization to form 1-pyrroline-5-carboxylate. The sequence is that of Gamma-glutamyl phosphate reductase from Xanthomonas campestris pv. campestris (strain B100).